Reading from the N-terminus, the 330-residue chain is Src kinase-associated phosphoprotein 2-B (330 aa).

A disordered region spans residues 57-84; that stretch reads DKAEDDDQEENDGFPLPPDAVSLASDRD. Over residues 59 to 68 the composition is skewed to acidic residues; that stretch reads AEDDDQEEND. One can recognise a PH domain in the interval 105-208; the sequence is EYLKAGYLEK…WINAIMNSRG (104 aa). A disordered region spans residues 236 to 261; sequence ELPEESEKPVTETETQKATPVPVNNT. Over residues 240 to 250 the composition is skewed to basic and acidic residues; it reads ESEKPVTETET. The span at 251–261 shows a compositional bias: polar residues; the sequence is QKATPVPVNNT. The 62-residue stretch at 268-329 folds into the SH3 domain; sequence DYANFYRGLW…PKAYIIEMYD (62 aa).

The protein belongs to the SKAP family. In terms of processing, phosphorylated on tyrosines.

It is found in the cytoplasm. Functionally, may be involved in B-cell and macrophage adhesion processes. May play a role in src signaling pathway. The chain is Src kinase-associated phosphoprotein 2-B (skap2-b) from Xenopus laevis (African clawed frog).